Reading from the N-terminus, the 476-residue chain is Ribosomal protein uS12 methylthiotransferase RimO (476 aa).

In terms of domain architecture, MTTase N-terminal spans 33–143 (NRIGFVSLGC…VLKHVHKYVP (111 aa)). [4Fe-4S] cluster is bound by residues Cys-42, Cys-78, Cys-107, Cys-175, Cys-179, and Cys-182. A Radical SAM core domain is found at 161–398 (LTPKHYAYLK…MEVQAEISAE (238 aa)). Positions 401–467 (ARFVGRTMDI…EHDLWAELVD (67 aa)) constitute a TRAM domain.

This sequence belongs to the methylthiotransferase family. RimO subfamily. [4Fe-4S] cluster serves as cofactor.

The protein resides in the cytoplasm. The enzyme catalyses L-aspartate(89)-[ribosomal protein uS12]-hydrogen + (sulfur carrier)-SH + AH2 + 2 S-adenosyl-L-methionine = 3-methylsulfanyl-L-aspartate(89)-[ribosomal protein uS12]-hydrogen + (sulfur carrier)-H + 5'-deoxyadenosine + L-methionine + A + S-adenosyl-L-homocysteine + 2 H(+). Its function is as follows. Catalyzes the methylthiolation of an aspartic acid residue of ribosomal protein uS12. This Shewanella sp. (strain MR-4) protein is Ribosomal protein uS12 methylthiotransferase RimO.